The primary structure comprises 809 residues: Plasminogen (809 aa).

The first 19 residues, 1–19 (MDHKEVVLLLLLFLKSGLG), serve as a signal peptide directing secretion. A PAN domain is found at 20-98 (DSLDDYVNTQ…RDVVLFEKRI (79 aa)). Disulfide bonds link Cys49–Cys73, Cys53–Cys61, Cys103–Cys181, Cys124–Cys164, Cys152–Cys176, Cys185–Cys262, Cys188–Cys316, Cys206–Cys245, Cys234–Cys257, Cys275–Cys352, Cys296–Cys335, Cys324–Cys347, Cys377–Cys454, Cys398–Cys437, Cys426–Cys449, Cys480–Cys559, Cys501–Cys542, Cys530–Cys554, Cys566–Cys684, Cys576–Cys584, Cys606–Cys622, Cys698–Cys765, Cys728–Cys744, and Cys755–Cys783. 2 consecutive Kringle domains span residues 103 to 181 (CKTG…IPEC) and 185 to 262 (CMHC…IPRC). O-linked (GalNAc...) threonine glycosylation is present at Thr268. Kringle domains lie at 275-352 (CLKG…IPSC), 377-454 (CYRG…LKKC), and 480-559 (CMFG…VPQC). An N-linked (GlcNAc...) asparagine glycan is attached at Asn308. The region spanning 580–807 (VVGGCVSIPH…FVTWIEEIMR (228 aa)) is the Peptidase S1 domain. Position 596 is a phosphoserine (Ser596). Residues His621 and Asp664 each act as charge relay system in the active site. Residue Ser759 is the Charge relay system of the active site.

Belongs to the peptidase S1 family. Plasminogen subfamily. As to quaternary structure, interacts with CSPG4 and AMOT. Interacts (via the Kringle domains) with HRG; the interaction tethers PLG to the cell surface and enhances its activation. Interacts (via Kringle 4 domain) with ADA; the interaction stimulates PLG activation when in complex with DPP4. Angiostatin: Interacts with ATP5F1A; the interaction inhibits most of the angiogenic effects of angiostatin. In terms of processing, N-linked glycan contains N-acetyllactosamine, sialic acid and is core fucosylated. O-linked glycans consist of Gal-GalNAc disaccharide which is modified with up to 2 sialic acid residues (microheterogeneity). Post-translationally, in the presence of the inhibitor, the activation involves only cleavage after Arg-579, yielding two chains held together by two disulfide bonds. In the absence of the inhibitor, the activation involves additionally the removal of the activation peptide.

The protein resides in the secreted. The enzyme catalyses Preferential cleavage: Lys-|-Xaa &gt; Arg-|-Xaa, higher selectivity than trypsin. Converts fibrin into soluble products.. Converted into plasmin by plasminogen activators, both plasminogen and its activator being bound to fibrin. Cannot be activated with streptokinase. In terms of biological role, plasmin dissolves the fibrin of blood clots and acts as a proteolytic factor in a variety of other processes including embryonic development, tissue remodeling, tumor invasion, and inflammation. In ovulation, weakens the walls of the Graafian follicle. It activates the urokinase-type plasminogen activator, collagenases and several complement zymogens, such as C1, C4 and C5. Cleavage of fibronectin and laminin leads to cell detachment and apoptosis. Also cleaves fibrin, thrombospondin and von Willebrand factor. Its role in tissue remodeling and tumor invasion may be modulated by CSPG4. Binds to cells. The protein is Plasminogen (PLG) of Sus scrofa (Pig).